Reading from the N-terminus, the 249-residue chain is Eukaryotic translation initiation factor 3 subunit K (249 aa).

The region spanning 46 to 222 (FDCYANLALL…VKVPSNKENE (177 aa)) is the PCI domain.

Belongs to the eIF-3 subunit K family. As to quaternary structure, component of the eukaryotic translation initiation factor 3 (eIF-3) complex.

It localises to the cytoplasm. Its function is as follows. Component of the eukaryotic translation initiation factor 3 (eIF-3) complex, which is involved in protein synthesis of a specialized repertoire of mRNAs and, together with other initiation factors, stimulates binding of mRNA and methionyl-tRNAi to the 40S ribosome. The eIF-3 complex specifically targets and initiates translation of a subset of mRNAs involved in cell proliferation. This is Eukaryotic translation initiation factor 3 subunit K from Aspergillus clavatus (strain ATCC 1007 / CBS 513.65 / DSM 816 / NCTC 3887 / NRRL 1 / QM 1276 / 107).